A 113-amino-acid chain; its full sequence is Cytochrome c (113 aa).

Heme c contacts are provided by Cys-21, Cys-24, His-25, and Met-90.

It belongs to the cytochrome c family. Post-translationally, binds 1 heme c group covalently per subunit.

Its subcellular location is the mitochondrion intermembrane space. Its function is as follows. Electron carrier protein. The oxidized form of the cytochrome c heme group can accept an electron from the heme group of the cytochrome c1 subunit of cytochrome reductase. Cytochrome c then transfers this electron to the cytochrome oxidase complex, the final protein carrier in the mitochondrial electron-transport chain. The protein is Cytochrome c (cytC) of Dictyostelium discoideum (Social amoeba).